Here is a 322-residue protein sequence, read N- to C-terminus: Beta-ketoacyl-[acyl-carrier-protein] synthase III (322 aa).

Catalysis depends on residues Cys-113 and His-249. Residues 250 to 254 are ACP-binding; that stretch reads QANLR. The active site involves Asn-279.

This sequence belongs to the thiolase-like superfamily. FabH family. As to quaternary structure, homodimer.

It localises to the cytoplasm. It catalyses the reaction malonyl-[ACP] + acetyl-CoA + H(+) = 3-oxobutanoyl-[ACP] + CO2 + CoA. The protein operates within lipid metabolism; fatty acid biosynthesis. In terms of biological role, catalyzes the condensation reaction of fatty acid synthesis by the addition to an acyl acceptor of two carbons from malonyl-ACP. Catalyzes the first condensation reaction which initiates fatty acid synthesis and may therefore play a role in governing the total rate of fatty acid production. Possesses both acetoacetyl-ACP synthase and acetyl transacylase activities. Its substrate specificity determines the biosynthesis of branched-chain and/or straight-chain of fatty acids. The polypeptide is Beta-ketoacyl-[acyl-carrier-protein] synthase III (Marinobacter nauticus (strain ATCC 700491 / DSM 11845 / VT8) (Marinobacter aquaeolei)).